The chain runs to 424 residues: ATP-sensitive inward rectifier potassium channel 8 (424 aa).

Residues 1-69 (MLARKSIIPE…IFTTLVDLKW (69 aa)) lie on the Cytoplasmic side of the membrane. Serine 6 carries the post-translational modification Phosphoserine. Residues 70 to 94 (RHTLVIFTMSFLCSWLLFAIMWWLV) form a helical membrane-spanning segment. The Extracellular segment spans residues 95-126 (AFAHGDIYAYMEKGTMEKSGLESAVCVTNVRS). The helical; Pore-forming intramembrane region spans 127–138 (FTSAFLFSIEVQ). Residues 139–145 (VTIGFGG) constitute an intramembrane region (pore-forming). Positions 140–145 (TIGFGG) match the Selectivity filter motif. Over 146-154 (RMMTEECPL) the chain is Extracellular. Residues 155–176 (AITVLILQNIVGLIINAVMLGC) form a helical membrane-spanning segment. Residues 177–424 (IFMKTAQAHR…PEGNQCPSES (248 aa)) are Cytoplasmic-facing. The tract at residues 373 to 409 (ELSHQNSLRKRNSMRRNNSMRRNNSIRRNNSSLMVPK) is disordered. A compositionally biased stretch (low complexity) spans 387–404 (RRNNSMRRNNSIRRNNSS).

It belongs to the inward rectifier-type potassium channel (TC 1.A.2.1) family. KCNJ8 subfamily. In terms of assembly, interacts with ABCC9.

The protein resides in the membrane. The enzyme catalyses K(+)(in) = K(+)(out). Functionally, inward rectifier potassium channels are characterized by a greater tendency to allow potassium to flow into the cell rather than out of it. Their voltage dependence is regulated by the concentration of extracellular potassium; as external potassium is raised, the voltage range of the channel opening shifts to more positive voltages. The inward rectification is mainly due to the blockage of outward current by internal magnesium. This channel is activated by internal ATP and can be blocked by external barium. Can form a sulfonylurea-sensitive but ATP-insensitive potassium channel with ABCC9. This Mus musculus (Mouse) protein is ATP-sensitive inward rectifier potassium channel 8 (Kcnj8).